Consider the following 122-residue polypeptide: Autophagy-related protein 8e (122 aa).

Gly-118 is lipidated: Phosphatidylethanolamine amidated glycine. Residues 119 to 122 (ASSI) constitute a propeptide, removed in mature form.

It belongs to the ATG8 family. As to quaternary structure, interacts with ATG4. Interacts with SH3P2. Interacts with ATG1A and ATG11. Binds to ATG1A and ATG11 on autophagic vesicles. Post-translationally, the C-terminal 4 residues are removed by ATG4 to expose Gly-118 at the C-terminus. This Gly-118 forms then a thioester bond with the 'Cys-558' of ATG7 (E1-like activating enzyme) before being transferred to the 'Cys-258' of ATG3 (the specific E2 conjugating enzyme), in order to be finally amidated with phosphatidylethanolamine. This lipid modification anchors ATG8 to autophagosomes. Constitutively expressed.

It is found in the cytoplasmic vesicle. The protein resides in the autophagosome membrane. The protein localises to the vacuole membrane. Its subcellular location is the cytoplasm. It localises to the cytoskeleton. Ubiquitin-like modifier involved in autophagosomes formation. May mediate the delivery of the autophagosomes to the vacuole via the microtubule cytoskeleton. In Arabidopsis thaliana (Mouse-ear cress), this protein is Autophagy-related protein 8e (ATG8E).